Consider the following 405-residue polypeptide: Glutathione S-transferase LANCL1 (405 aa).

C282 is a binding site for Zn(2+). K323 serves as a coordination point for glutathione. Zn(2+) is bound by residues C328 and H329. Glutathione is bound at residue 370–373; it reads RTPD.

Belongs to the LanC-like protein family.

The protein resides in the cytoplasm. It localises to the cell membrane. It catalyses the reaction RX + glutathione = an S-substituted glutathione + a halide anion + H(+). It carries out the reaction 1-chloro-2,4-dinitrobenzene + glutathione = 2,4-dinitrophenyl-S-glutathione + chloride + H(+). Its function is as follows. Functions as a glutathione transferase. Catalyzes conjugation of the glutathione (GSH) to artificial substrates 1-chloro-2,4-dinitrobenzene (CDNB) and p-nitrophenyl acetate. Binds glutathione. In Danio rerio (Zebrafish), this protein is Glutathione S-transferase LANCL1.